The chain runs to 504 residues: Maturase K (504 aa).

It belongs to the intron maturase 2 family. MatK subfamily.

Its subcellular location is the plastid. It localises to the chloroplast. Its function is as follows. Usually encoded in the trnK tRNA gene intron. Probably assists in splicing its own and other chloroplast group II introns. The sequence is that of Maturase K from Lepidium virginicum (Virginia pepperweed).